Consider the following 97-residue polypeptide: Antitoxin TacA2 (97 aa).

The protein belongs to the TacA antitoxin family. In terms of assembly, homodimer. Forms a complex with cognate toxin TacT2.

In terms of biological role, antitoxin component of a type II toxin-antitoxin (TA) system. Counteracts the toxic effect of cognate toxin TacT2. Its function is as follows. The TacA2-TacT2 complex both represses and derepresses expression of its own operon. This is Antitoxin TacA2 from Salmonella enteritidis.